We begin with the raw amino-acid sequence, 400 residues long: Melanization protease 1 (400 aa).

The first 22 residues, 1–22 (MEPHFFFTVLWMLLMGTSSTYA), serve as a signal peptide directing secretion. A propeptide spans 23 to 137 (QEIFGYCRTP…PNCGENFGDR (115 aa)) (activation peptide). One can recognise a Clip domain in the interval 28 to 91 (YCRTPDENSG…FCFTNVQICC (64 aa)). 3 cysteine pairs are disulfide-bonded: cysteine 29-cysteine 90, cysteine 39-cysteine 70, and cysteine 45-cysteine 91. The tract at residues 98–120 (NQQPQWGNHPQPTQTTKPTKRSG) is disordered. 3 disulfide bridges follow: cysteine 130/cysteine 268, cysteine 168/cysteine 184, and cysteine 210/cysteine 220. The Peptidase S1 domain maps to 138–399 (VVGGNETTKR…YLNWIENNVR (262 aa)). Asparagine 142 carries an N-linked (GlcNAc...) asparagine glycan. Histidine 183 (charge relay system) is an active-site residue. Ca(2+)-binding residues include glutamate 201, aspartate 203, threonine 206, and aspartate 209. Aspartate 248 (charge relay system) is an active-site residue. N-linked (GlcNAc...) asparagine glycosylation is present at asparagine 296. 2 disulfide bridges follow: cysteine 315–cysteine 332 and cysteine 342–cysteine 375. Catalysis depends on serine 346, which acts as the Charge relay system.

Belongs to the peptidase S1 family. CLIP subfamily.

In terms of biological role, serine protease which plays an essential role in the melanization immune response by acting downstream of sp7 to activate prophenoloxidase (PPO1). May function in diverse Hayan-dependent PPO1-activating cascades that are negatively controlled by different serpin proteins; Spn27A in the hemolymph and Spn77BA in the trachea. Regulation of melanization and PPO1 activation appears to be largely independent of the Toll signaling pathway. The chain is Melanization protease 1 from Drosophila melanogaster (Fruit fly).